Reading from the N-terminus, the 176-residue chain is Ribosome maturation factor RimM (176 aa).

One can recognise a PRC barrel domain in the interval 96 to 176; it reads PEDEFYWRDL…QILVDWDPDF (81 aa).

Belongs to the RimM family. In terms of assembly, binds ribosomal protein uS19.

Its subcellular location is the cytoplasm. Functionally, an accessory protein needed during the final step in the assembly of 30S ribosomal subunit, possibly for assembly of the head region. Essential for efficient processing of 16S rRNA. May be needed both before and after RbfA during the maturation of 16S rRNA. It has affinity for free ribosomal 30S subunits but not for 70S ribosomes. The chain is Ribosome maturation factor RimM from Shewanella woodyi (strain ATCC 51908 / MS32).